We begin with the raw amino-acid sequence, 434 residues long: 4-hydroxy-3-methylbut-2-en-1-yl diphosphate synthase (flavodoxin) (434 aa).

Polar residues predominate over residues 1–15 (MQSEAQSPRSSQICS). Positions 1-24 (MQSEAQSPRSSQICSTEPVFGGHQ) are disordered. [4Fe-4S] cluster-binding residues include Cys322, Cys325, Cys368, and Glu375.

Belongs to the IspG family. [4Fe-4S] cluster serves as cofactor.

The catalysed reaction is (2E)-4-hydroxy-3-methylbut-2-enyl diphosphate + oxidized [flavodoxin] + H2O + 2 H(+) = 2-C-methyl-D-erythritol 2,4-cyclic diphosphate + reduced [flavodoxin]. The protein operates within isoprenoid biosynthesis; isopentenyl diphosphate biosynthesis via DXP pathway; isopentenyl diphosphate from 1-deoxy-D-xylulose 5-phosphate: step 5/6. Converts 2C-methyl-D-erythritol 2,4-cyclodiphosphate (ME-2,4cPP) into 1-hydroxy-2-methyl-2-(E)-butenyl 4-diphosphate. This is 4-hydroxy-3-methylbut-2-en-1-yl diphosphate synthase (flavodoxin) from Burkholderia cenocepacia (strain ATCC BAA-245 / DSM 16553 / LMG 16656 / NCTC 13227 / J2315 / CF5610) (Burkholderia cepacia (strain J2315)).